Here is a 136-residue protein sequence, read N- to C-terminus: Small ribosomal subunit protein eS6 (136 aa).

The protein belongs to the eukaryotic ribosomal protein eS6 family.

This Methanosarcina acetivorans (strain ATCC 35395 / DSM 2834 / JCM 12185 / C2A) protein is Small ribosomal subunit protein eS6.